The primary structure comprises 169 residues: MGTGDPGGAPRLTHFDEHGNAAMVDVSAKAETERVATAEALVSMRPETFALIESGGIAKGDVLGVARIAGIMAAKRTADLIPLCHPLALSRVAVDFALLPDRPAVRIEATVTLKGRTGVEMEALTAVSVAALTLYDMCKAVDRGMTIGGIRLLHKSGGKSGTYRAGDEA.

Substrate is bound by residues 83 to 85 (LCH) and 121 to 122 (ME). D136 is a catalytic residue.

The protein belongs to the MoaC family. In terms of assembly, homohexamer; trimer of dimers.

The catalysed reaction is (8S)-3',8-cyclo-7,8-dihydroguanosine 5'-triphosphate = cyclic pyranopterin phosphate + diphosphate. It functions in the pathway cofactor biosynthesis; molybdopterin biosynthesis. Its function is as follows. Catalyzes the conversion of (8S)-3',8-cyclo-7,8-dihydroguanosine 5'-triphosphate to cyclic pyranopterin monophosphate (cPMP). In Rhodospirillum centenum (strain ATCC 51521 / SW), this protein is Cyclic pyranopterin monophosphate synthase.